The chain runs to 218 residues: uncharacterized protein (218 aa).

The interval 1–24 (MAAQPQAPSAGGRPRAGKAVKSVA) is disordered. One can recognise an HTH tetR-type domain in the interval 28 to 88 (KLSRESIVEG…AVRIRVIDDI (61 aa)). The segment at residues 51–70 (TINALATQLGTKGPSLYNHV) is a DNA-binding region (H-T-H motif). T57 carries the phosphothreonine; by PknH modification.

Phosphorylated on Thr-57 by PknH.

This is an uncharacterized protein from Mycobacterium tuberculosis (strain ATCC 25618 / H37Rv).